Here is a 597-residue protein sequence, read N- to C-terminus: Elongation factor 4 (597 aa).

Positions 2-184 constitute a tr-type G domain; it reads DHIRNFSIIA…ALIAKVPPPK (183 aa). GTP is bound by residues 14-19 and 131-134; these read DHGKST and NKID.

This sequence belongs to the TRAFAC class translation factor GTPase superfamily. Classic translation factor GTPase family. LepA subfamily.

It localises to the cell inner membrane. It catalyses the reaction GTP + H2O = GDP + phosphate + H(+). Required for accurate and efficient protein synthesis under certain stress conditions. May act as a fidelity factor of the translation reaction, by catalyzing a one-codon backward translocation of tRNAs on improperly translocated ribosomes. Back-translocation proceeds from a post-translocation (POST) complex to a pre-translocation (PRE) complex, thus giving elongation factor G a second chance to translocate the tRNAs correctly. Binds to ribosomes in a GTP-dependent manner. The sequence is that of Elongation factor 4 from Cupriavidus taiwanensis (strain DSM 17343 / BCRC 17206 / CCUG 44338 / CIP 107171 / LMG 19424 / R1) (Ralstonia taiwanensis (strain LMG 19424)).